The sequence spans 339 residues: uncharacterized protein (339 aa).

The first 29 residues, 1-29 (MIKQVCKNITICSLALSTALTVFPASSYA), serve as a signal peptide directing secretion.

This sequence belongs to the aerolysin family.

This is an uncharacterized protein from Staphylococcus aureus (strain MRSA252).